The following is a 52-amino-acid chain: Large ribosomal subunit protein eL40 (52 aa).

The protein belongs to the eukaryotic ribosomal protein eL40 family.

The protein is Large ribosomal subunit protein eL40 of Thermococcus onnurineus (strain NA1).